A 174-amino-acid polypeptide reads, in one-letter code: Interleukin-1 receptor antagonist protein (174 aa).

Positions 1-23 are cleaved as a signal peptide; that stretch reads MDIYIHGYLICLLLFLFRSETAC. The cysteines at positions 89 and 139 are disulfide-linked. N-linked (GlcNAc...) asparagine glycosylation is present at Asn-107.

It belongs to the IL-1 family.

The protein resides in the secreted. Functionally, anti-inflammatory antagonist of interleukin-1 family of proinflammatory cytokines such as interleukin-1beta/IL1B and interleukin-1alpha/IL1A. Protects from immune dysregulation and uncontrolled systemic inflammation triggered by IL1 for a range of innate stimulatory agents such as pathogens. This chain is Interleukin-1 receptor antagonist protein (IL1RN), found in Bos taurus (Bovine).